A 481-amino-acid chain; its full sequence is Bindin (481 aa).

A signal peptide spans 1–20 (MGFHQILVTVVALALASVRA). The propeptide occupies 21–245 (EFPSRTDSPT…DSKRGARKKR (225 aa)). 2 stretches are compositionally biased toward basic and acidic residues: residues 154 to 163 (DGDLRKRRES) and 178 to 189 (RKGDEPAGHTLK). 2 disordered regions span residues 154 to 193 (DGDLRKRRESEDVDDDDVSKRASPRKGDEPAGHTLKDLAP) and 219 to 243 (GHSPTRRATDNDAAVSDDSKRGARK). The interval 352 to 360 (LRHLRHHSN) is fucose-binding domain. The tract at residues 376–481 (SAMQEEEEEE…QPYGQGYLQG (106 aa)) is disordered. Residues 379-389 (QEEEEEEEEDA) show a composition bias toward acidic residues. Gly residues predominate over residues 406–416 (AGFGGGGGGGA). Low complexity-rich tracts occupy residues 417 to 440 (MMSPQQMGGQPQGMIGQPQGMGFP) and 464 to 481 (GMGMPPQGQPYGQGYLQG).

This sequence belongs to the bindin family.

Its subcellular location is the cytoplasmic vesicle. It is found in the secretory vesicle. The protein localises to the acrosome lumen. Its function is as follows. Species-specific sea urchin sperm protein required for adhesion of sperm to the egg surface during fertilization. Bindin coats the acrosomal process after it is externalized by the acrosome reaction. It binds to sulfated, fucose-containing polysaccharides on the vitelline layer receptor proteoglycans which cover the egg plasma membrane. This is Bindin from Strongylocentrotus purpuratus (Purple sea urchin).